We begin with the raw amino-acid sequence, 545 residues long: CTP synthase (545 aa).

Positions 1-265 (MTKYIFITGG…DEIVVKKLSL (265 aa)) are amidoligase domain. S13 serves as a coordination point for CTP. Position 13 (S13) interacts with UTP. ATP is bound by residues 14–19 (SLGKGI) and D71. Mg(2+)-binding residues include D71 and E139. CTP-binding positions include 146–148 (DIE), 186–191 (KTKPTQ), and K222. UTP-binding positions include 186–191 (KTKPTQ) and K222. Residues 290 to 541 (KIAMVGKYTE…VFAARIHHQE (252 aa)) enclose the Glutamine amidotransferase type-1 domain. Residue G351 coordinates L-glutamine. Catalysis depends on C378, which acts as the Nucleophile; for glutamine hydrolysis. L-glutamine-binding positions include 379-382 (LGMQ), E402, and R469. Residues H514 and E516 contribute to the active site.

Belongs to the CTP synthase family. Homotetramer.

It carries out the reaction UTP + L-glutamine + ATP + H2O = CTP + L-glutamate + ADP + phosphate + 2 H(+). The enzyme catalyses L-glutamine + H2O = L-glutamate + NH4(+). It catalyses the reaction UTP + NH4(+) + ATP = CTP + ADP + phosphate + 2 H(+). It functions in the pathway pyrimidine metabolism; CTP biosynthesis via de novo pathway; CTP from UDP: step 2/2. Allosterically activated by GTP, when glutamine is the substrate; GTP has no effect on the reaction when ammonia is the substrate. The allosteric effector GTP functions by stabilizing the protein conformation that binds the tetrahedral intermediate(s) formed during glutamine hydrolysis. Inhibited by the product CTP, via allosteric rather than competitive inhibition. Catalyzes the ATP-dependent amination of UTP to CTP with either L-glutamine or ammonia as the source of nitrogen. Regulates intracellular CTP levels through interactions with the four ribonucleotide triphosphates. This chain is CTP synthase, found in Legionella pneumophila (strain Lens).